The following is a 587-amino-acid chain: Probable intramembrane protease YKL100C (587 aa).

Topologically, residues 1–85 (MDKYLNSFVD…HSLVFNYATL (85 aa)) are lumenal. A helical transmembrane segment spans residues 86–106 (VLIASALVVIGSFTSISSIPF). Topologically, residues 107–156 (TALPPTREHSLFDPTDFDVDHDCHVIYRENDEDKKKKKKSKRFFDMMDEK) are cytoplasmic. The helical transmembrane segment at 157-177 (HAIILPLTSGCTLLALYFVIK) threads the bilayer. Residues 178 to 192 (KLHLNWLKYVVKILN) are Lumenal-facing. Residues 193 to 213 (FNITLLNIPAGTFVYSYFLNS) form a helical membrane-spanning segment. Topologically, residues 214–303 (LFRNLSHLAS…KSKRQISNMY (90 aa)) are cytoplasmic. Residues 304 to 324 (LNSALIVSFVLSIVSTVYFYL) form a helical membrane-spanning segment. At 325–328 (SPND) the chain is on the lumenal side. Residues 329-349 (WLISNAVSMNMAIWSIAQLKL) form a helical membrane-spanning segment. Topologically, residues 350-351 (KN) are cytoplasmic. A helical transmembrane segment spans residues 352–372 (LKSGALILIALFFYDICFVFG). D366 is an active-site residue. The Lumenal portion of the chain corresponds to 373–401 (TDVMVTVATNLDIPVKLSLPVKFNTAQNN). The chain crosses the membrane as a helical span at residues 402–422 (FNFSILGLGDIALPGMFIAMC). D411 is a catalytic residue. Residues 423 to 450 (YKYDIWKWHLDHDDTEFHFLNWSYVGKY) lie on the Cytoplasmic side of the membrane. The chain crosses the membrane as a helical span at residues 451–471 (FITAMVSYVASLVSAMVSLSI). Over 472–475 (FNTA) the chain is Lumenal. The helical transmembrane segment at 476 to 496 (QPALLYIVPSLLISTILVACW) threads the bilayer. Positions 477–479 (PAL) match the PAL motif. Topologically, residues 497–587 (NKDFKQFWNF…EEDLLDDESS (91 aa)) are cytoplasmic. Residues 561-587 (EFVQEEDLSDSSEEELSEEDLLDDESS) are disordered.

This sequence belongs to the peptidase A22B family.

It is found in the membrane. The protein localises to the endoplasmic reticulum membrane. In terms of biological role, may act as intramembrane protease. The sequence is that of Probable intramembrane protease YKL100C from Saccharomyces cerevisiae (strain ATCC 204508 / S288c) (Baker's yeast).